The following is a 200-amino-acid chain: UPF0316 protein Mhun_0543 (200 aa).

The next 3 helical transmembrane spans lie at 3-23 (VGFLSSDLFTFGLIPVLIFLA), 44-64 (FIAPVFGFFEVTIWLLAIGQV), and 71-91 (PICYIAYGAGFAAGTYIGMEL).

Belongs to the UPF0316 family.

The protein resides in the cell membrane. The sequence is that of UPF0316 protein Mhun_0543 from Methanospirillum hungatei JF-1 (strain ATCC 27890 / DSM 864 / NBRC 100397 / JF-1).